Consider the following 61-residue polypeptide: Protein transport protein Sec61 subunit beta (61 aa).

Topologically, residues 1–35 (MKRPSTQRAPATVNKGGNSMMKFYSEDAIGLKVGP) are cytoplasmic. Residues 36 to 56 (TAVLFMSLIFIAFVIILHIMG) traverse the membrane as a helical segment. Residues 57–61 (KYTRS) lie on the Extracellular side of the membrane.

This sequence belongs to the SEC61-beta family. In terms of assembly, the SEC61 channel-forming translocon complex.

It localises to the endoplasmic reticulum membrane. Functionally, component of SEC61 channel-forming translocon complex that mediates transport of signal peptide-containing precursor polypeptides across the endoplasmic reticulum (ER). Forms a ribosome receptor and a gated pore in the ER membrane, both functions required for cotranslational translocation of nascent polypeptides. This chain is Protein transport protein Sec61 subunit beta (sec61b), found in Dictyostelium discoideum (Social amoeba).